We begin with the raw amino-acid sequence, 120 residues long: NAD(P)H-quinone oxidoreductase subunit 3 (120 aa).

Helical transmembrane passes span 10-30 (FLGF…TNLI), 64-84 (MFAL…PWAV), and 89-109 (LGLL…IALA).

It belongs to the complex I subunit 3 family. NDH-1 can be composed of about 15 different subunits; different subcomplexes with different compositions have been identified which probably have different functions.

The protein resides in the cellular thylakoid membrane. It carries out the reaction a plastoquinone + NADH + (n+1) H(+)(in) = a plastoquinol + NAD(+) + n H(+)(out). The enzyme catalyses a plastoquinone + NADPH + (n+1) H(+)(in) = a plastoquinol + NADP(+) + n H(+)(out). Its function is as follows. NDH-1 shuttles electrons from an unknown electron donor, via FMN and iron-sulfur (Fe-S) centers, to quinones in the respiratory and/or the photosynthetic chain. The immediate electron acceptor for the enzyme in this species is believed to be plastoquinone. Couples the redox reaction to proton translocation, and thus conserves the redox energy in a proton gradient. Cyanobacterial NDH-1 also plays a role in inorganic carbon-concentration. In Prochlorococcus marinus (strain AS9601), this protein is NAD(P)H-quinone oxidoreductase subunit 3.